A 75-amino-acid polypeptide reads, in one-letter code: Conotoxin Vn5.5 (75 aa).

An N-terminal signal peptide occupies residues 1 to 19 (MLCLPVFIILLLLASPAAP). Positions 20–59 (NPLEKRIQSDLIRAALEDADMKTDEREIVNIIDSISDVAK) are excised as a propeptide. Q60 carries the pyrrolidone carboxylic acid modification.

Belongs to the conotoxin T superfamily. Post-translationally, contains 2 disulfide bonds that can be either 'C1-C3, C2-C4' or 'C1-C4, C2-C3', since these disulfide connectivities have been observed for conotoxins with cysteine framework V (for examples, see AC P0DQQ7 and AC P81755). As to expression, expressed by the venom duct.

The protein resides in the secreted. The protein is Conotoxin Vn5.5 of Conus ventricosus (Mediterranean cone).